A 328-amino-acid polypeptide reads, in one-letter code: Cytochrome c biogenesis protein CcsA (328 aa).

Transmembrane regions (helical) follow at residues 13–33 (ISFS…LVNL), 46–66 (GIII…IYSG), 73–93 (LYES…VSYF), 101–121 (LNTI…SGLL), 146–166 (MILG…LLVI), 234–254 (IISL…VWAN), 263–283 (WDPK…YLHI), and 295–315 (AIVA…VNLL).

It belongs to the CcmF/CycK/Ccl1/NrfE/CcsA family. May interact with Ccs1.

It localises to the plastid. It is found in the chloroplast thylakoid membrane. Its function is as follows. Required during biogenesis of c-type cytochromes (cytochrome c6 and cytochrome f) at the step of heme attachment. This is Cytochrome c biogenesis protein CcsA from Arabidopsis thaliana (Mouse-ear cress).